The following is a 231-amino-acid chain: MFLVGLTGGIASGKSSVIQVFQQLGCAVIDVDVIARHVVQPGYPAHRRIVEAFGTEVLLENGDIDRKVLGDLIFNQPDRRQLLNSITHPEIRKEMMKETFKYFLRGYRYVILDIPLLFETKKLLKYMKHTVVVYCDRDTQLARLMKRNNLNREDAEARINAQLPLKDKARMANHVLDNSGEWSLTRRQAILLHAKLERSMEYLPLRLGFLTGLAGIASLLYLLTRYLLPSP.

Residues 3-207 form the DPCK domain; that stretch reads LVGLTGGIAS…RSMEYLPLRL (205 aa). Residue 8–15 participates in ATP binding; sequence GGIASGKS.

The protein belongs to the CoaE family.

The sequence is that of Dephospho-CoA kinase domain-containing protein (Dcakd) from Mus musculus (Mouse).